Here is a 348-residue protein sequence, read N- to C-terminus: UPF0283 membrane protein PMI1371 (348 aa).

Helical transmembrane passes span 69 to 89 and 99 to 119; these read LITV…GQWI and IALG…GSVI.

The protein belongs to the UPF0283 family.

The protein resides in the cell inner membrane. The polypeptide is UPF0283 membrane protein PMI1371 (Proteus mirabilis (strain HI4320)).